The following is a 259-amino-acid chain: Potassium/proton antiporter CemA (259 aa).

A run of 4 helical transmembrane segments spans residues Cys47–Val67, Ile136–Met156, Ile184–Ile204, and Ile219–Ile239.

This sequence belongs to the CemA family.

It localises to the plastid. The protein resides in the chloroplast inner membrane. The catalysed reaction is K(+)(in) + H(+)(out) = K(+)(out) + H(+)(in). Contributes to K(+)/H(+) antiport activity by supporting proton efflux to control proton extrusion and homeostasis in chloroplasts in a light-dependent manner to modulate photosynthesis. Prevents excessive induction of non-photochemical quenching (NPQ) under continuous-light conditions. Indirectly promotes efficient inorganic carbon uptake into chloroplasts. In Welwitschia mirabilis (Tree tumbo), this protein is Potassium/proton antiporter CemA.